Consider the following 491-residue polypeptide: Chromosomal replication initiator protein DnaA (491 aa).

Residues 1–69 (MTTWDKCLKK…TIQECHGNDL (69 aa)) are domain I, interacts with DnaA modulators. A domain II region spans residues 69 to 154 (LIIEYSNKKF…KEDEEYSFGL (86 aa)). A domain III, AAA+ region region spans residues 155-371 (PLKEKYVFDS…GALNRVLTTS (217 aa)). Positions 199, 201, 202, and 203 each coordinate ATP. A domain IV, binds dsDNA region spans residues 372–491 (KFNHKDPTIE…YELLLDKISR (120 aa)).

The protein belongs to the DnaA family. As to quaternary structure, oligomerizes as a right-handed, spiral filament on DNA at oriC.

The protein resides in the cytoplasm. Its function is as follows. Plays an essential role in the initiation and regulation of chromosomal replication. ATP-DnaA binds to the origin of replication (oriC) to initiate formation of the DNA replication initiation complex once per cell cycle. Binds the DnaA box (a 9 base pair repeat at the origin) and separates the double-stranded (ds)DNA. Forms a right-handed helical filament on oriC DNA; dsDNA binds to the exterior of the filament while single-stranded (ss)DNA is stabiized in the filament's interior. The ATP-DnaA-oriC complex binds and stabilizes one strand of the AT-rich DNA unwinding element (DUE), permitting loading of DNA polymerase. After initiation quickly degrades to an ADP-DnaA complex that is not apt for DNA replication. Binds acidic phospholipids. In Francisella tularensis subsp. holarctica (strain FTNF002-00 / FTA), this protein is Chromosomal replication initiator protein DnaA.